A 160-amino-acid chain; its full sequence is SsrA-binding protein (160 aa).

Residues 131–160 (KKEYDKRHTERERDSDRELQRAVRSKGKDD) are disordered.

This sequence belongs to the SmpB family.

Its subcellular location is the cytoplasm. Required for rescue of stalled ribosomes mediated by trans-translation. Binds to transfer-messenger RNA (tmRNA), required for stable association of tmRNA with ribosomes. tmRNA and SmpB together mimic tRNA shape, replacing the anticodon stem-loop with SmpB. tmRNA is encoded by the ssrA gene; the 2 termini fold to resemble tRNA(Ala) and it encodes a 'tag peptide', a short internal open reading frame. During trans-translation Ala-aminoacylated tmRNA acts like a tRNA, entering the A-site of stalled ribosomes, displacing the stalled mRNA. The ribosome then switches to translate the ORF on the tmRNA; the nascent peptide is terminated with the 'tag peptide' encoded by the tmRNA and targeted for degradation. The ribosome is freed to recommence translation, which seems to be the essential function of trans-translation. In Pseudomonas syringae pv. syringae (strain B728a), this protein is SsrA-binding protein.